Here is a 292-residue protein sequence, read N- to C-terminus: Probable septum site-determining protein MinC (292 aa).

The disordered stretch occupies residues 112–188; that stretch reads DTAPPNDVAT…PQSSSALVIT (77 aa). The span at 128 to 137 shows a compositional bias: low complexity; the sequence is EATAEAAAKA. Residues 140–150 are compositionally biased toward acidic residues; the sequence is QDDEAYGEQAD. The segment covering 171–185 has biased composition (polar residues); the sequence is ANRPTATPPQSSSAL.

This sequence belongs to the MinC family. As to quaternary structure, interacts with MinD and FtsZ.

Functionally, cell division inhibitor that blocks the formation of polar Z ring septums. Rapidly oscillates between the poles of the cell to destabilize FtsZ filaments that have formed before they mature into polar Z rings. Prevents FtsZ polymerization. This Bordetella bronchiseptica (strain ATCC BAA-588 / NCTC 13252 / RB50) (Alcaligenes bronchisepticus) protein is Probable septum site-determining protein MinC.